A 458-amino-acid chain; its full sequence is ATP synthase subunit beta (458 aa).

148-155 is a binding site for ATP; that stretch reads GGAGVGKT.

This sequence belongs to the ATPase alpha/beta chains family. In terms of assembly, F-type ATPases have 2 components, CF(1) - the catalytic core - and CF(0) - the membrane proton channel. CF(1) has five subunits: alpha(3), beta(3), gamma(1), delta(1), epsilon(1). CF(0) has three main subunits: a(1), b(2) and c(9-12). The alpha and beta chains form an alternating ring which encloses part of the gamma chain. CF(1) is attached to CF(0) by a central stalk formed by the gamma and epsilon chains, while a peripheral stalk is formed by the delta and b chains.

Its subcellular location is the cell inner membrane. It catalyses the reaction ATP + H2O + 4 H(+)(in) = ADP + phosphate + 5 H(+)(out). Its function is as follows. Produces ATP from ADP in the presence of a proton gradient across the membrane. The catalytic sites are hosted primarily by the beta subunits. The sequence is that of ATP synthase subunit beta from Pseudomonas fluorescens (strain ATCC BAA-477 / NRRL B-23932 / Pf-5).